The sequence spans 77 residues: SS18-like protein 2 (77 aa).

An SH2-binding motif is present at residues 50–53 (YQHV).

It belongs to the SS18 family.

The chain is SS18-like protein 2 (SS18L2) from Homo sapiens (Human).